The primary structure comprises 397 residues: Subtilisin-like protease 3 (397 aa).

The signal sequence occupies residues 1-19 (MGCIKVISVFLAAIAAVDA). Positions 20–116 (RAFFHNRGGS…VEHDRVVKLA (97 aa)) are excised as a propeptide. Residues 35 to 116 (SYIVVMKDGV…VEHDRVVKLA (82 aa)) form the Inhibitor I9 domain. Positions 126-397 (TWGLGRVSHR…NRLLYNGSGQ (272 aa)) constitute a Peptidase S8 domain. Catalysis depends on charge relay system residues aspartate 158 and histidine 189. N-linked (GlcNAc...) asparagine glycosylation occurs at asparagine 250. Catalysis depends on serine 344, which acts as the Charge relay system. An N-linked (GlcNAc...) asparagine glycan is attached at asparagine 393.

The protein belongs to the peptidase S8 family.

It localises to the secreted. Its function is as follows. Secreted subtilisin-like serine protease with keratinolytic activity that contributes to pathogenicity. In Trichophyton tonsurans (Scalp ringworm fungus), this protein is Subtilisin-like protease 3 (SUB3).